A 265-amino-acid polypeptide reads, in one-letter code: MDELERVYQSIKNIFTHSAPSEKLVGLQNRLSISLRFIEYAFETYQPERLAMSFNGGKDCLVLFLLCIYYLKEKYKEQAQAKLSNIPFVFVRPRDEFPEMDDFVNECQSKYRLNIIKISLPMKEAFCKFLKEHKHIQAILIGIRRLDPHGLHRIAFEVTDKGWPKFMRIQPILDWSYTEIWDLLLETNTKYCSLYDRGYTSLGGVSDTSPNPALKNPDGTYSPAYLLSDGSLERAGRNNTVPFSRTNSRFLYDSGASSYASSEVS.

This sequence belongs to the PAPS reductase family. FAD1 subfamily.

The catalysed reaction is FMN + ATP + H(+) = FAD + diphosphate. The protein operates within cofactor biosynthesis; FAD biosynthesis; FAD from FMN: step 1/1. In terms of biological role, adenylates FMN to FAD. This chain is Probable FAD synthase, found in Schizosaccharomyces pombe (strain 972 / ATCC 24843) (Fission yeast).